The following is a 276-amino-acid chain: Tumor necrosis factor-inducible gene 6 protein (276 aa).

A signal peptide spans 1–17; that stretch reads MIILIYLFVLVWEEAQG. Residues 36–129 enclose the Link domain; that stretch reads GVYHREARSG…SERWDAYCYN (94 aa). Intrachain disulfides connect C58-C127, C82-C103, and C135-C161. N118 carries an N-linked (GlcNAc...) asparagine glycan. The CUB domain occupies 135–247; that stretch reads CGGVFTDPKR…GGFQIKYVTV (113 aa). Ca(2+) contacts are provided by E183, D191, D232, S234, and V235. A disulfide bond links C188 and C210. The N-linked (GlcNAc...) asparagine glycan is linked to N258.

As to quaternary structure, interacts (via Link domain) with inter-alpha-inhibitor (I-alpha-I) component bikunin. Interacts with ITIH2/HC2; this interaction is required for transesterification of the HC to hyaluronan. Interacts (via Link and CUB domains) with ITIH1. Chondroitin sulfate may be required for the stability of the complex. Interacts (via Link domain) with various C-X-C and C-C chemokines including PF4, CXCL8, CXCL11, CXCL12, CCL2, CCL7, CCL19, CCL21, and CCL27; this interaction interferes with chemokine binding to glycosaminoglycans. Interacts (primarily via Link domain) with BMP2; this interaction is inhibited by hyaluronan. Interacts (via both Link and CUB domains) with TNFSF11. Interacts (via CUB domain) with FN1 (via type III repeats 9-14); this interaction enhances fibronectin fibril assembly. TNFAIP6 may act as a bridging molecule between FN1 and THBS1. Vascular smooth muscle cells.

The protein localises to the secreted. Major regulator of extracellular matrix organization during tissue remodeling. Catalyzes the transfer of a heavy chain (HC) from inter-alpha-inhibitor (I-alpha-I) complex to hyaluronan. Cleaves the ester bond between the C-terminus of the HC and GalNAc residue of the chondroitin sulfate chain in I-alpha-I complex followed by transesterification of the HC to hyaluronan. In the process, potentiates the antiprotease function of I-alpha-I complex through release of free bikunin. Acts as a catalyst in the formation of hyaluronan-HC oligomers and hyaluronan-rich matrix surrounding the cumulus cell-oocyte complex, a necessary step for oocyte fertilization. Assembles hyaluronan in pericellular matrices that serve as platforms for receptor clustering and signaling. Enables binding of hyaluronan deposited on the surface of macrophages to LYVE1 on lymphatic endothelium and facilitates macrophage extravasation. Alters hyaluronan binding to functionally latent CD44 on vascular endothelium, switching CD44 into an active state that supports leukocyte rolling. Modulates the interaction of chemokines with extracellular matrix components and proteoglycans on endothelial cell surface, likely preventing chemokine gradient formation. In a negative feedback mechanism, may limit excessive neutrophil recruitment at inflammatory sites by antagonizing the association of CXCL8 with glycosaminoglycans on vascular endothelium. Has a role in osteogenesis and bone remodeling. Inhibits BMP2-dependent differentiation of mesenchymal stem cell to osteoblasts. Protects against bone erosion during inflammation by inhibiting TNFSF11/RANKL-dependent osteoclast activation. This chain is Tumor necrosis factor-inducible gene 6 protein (TNFAIP6), found in Oryctolagus cuniculus (Rabbit).